Here is a 441-residue protein sequence, read N- to C-terminus: N-succinylarginine dihydrolase (441 aa).

Substrate contacts are provided by residues 19-28 (AGLSFGNEAS), Asn110, and 137-138 (HR). Glu174 is a catalytic residue. Position 212 (Arg212) interacts with substrate. His248 is an active-site residue. Substrate is bound by residues Asp250 and Asn359. Residue Cys365 is the Nucleophile of the active site.

The protein belongs to the succinylarginine dihydrolase family. In terms of assembly, homodimer.

The enzyme catalyses N(2)-succinyl-L-arginine + 2 H2O + 2 H(+) = N(2)-succinyl-L-ornithine + 2 NH4(+) + CO2. It functions in the pathway amino-acid degradation; L-arginine degradation via AST pathway; L-glutamate and succinate from L-arginine: step 2/5. Its function is as follows. Catalyzes the hydrolysis of N(2)-succinylarginine into N(2)-succinylornithine, ammonia and CO(2). This Erwinia tasmaniensis (strain DSM 17950 / CFBP 7177 / CIP 109463 / NCPPB 4357 / Et1/99) protein is N-succinylarginine dihydrolase.